A 120-amino-acid polypeptide reads, in one-letter code: Ribosome-binding factor A (120 aa).

This sequence belongs to the RbfA family. As to quaternary structure, monomer. Binds 30S ribosomal subunits, but not 50S ribosomal subunits or 70S ribosomes.

Its subcellular location is the cytoplasm. Its function is as follows. One of several proteins that assist in the late maturation steps of the functional core of the 30S ribosomal subunit. Associates with free 30S ribosomal subunits (but not with 30S subunits that are part of 70S ribosomes or polysomes). Required for efficient processing of 16S rRNA. May interact with the 5'-terminal helix region of 16S rRNA. The chain is Ribosome-binding factor A from Clostridium botulinum (strain ATCC 19397 / Type A).